Consider the following 480-residue polypeptide: Porphobilinogen deaminase, chloroplastic (480 aa).

The transit peptide at 1–139 (MYCGRYETIG…VSGGRIWSLA (139 aa)) directs the protein to the chloroplast. At Cys395 the chain carries S-(dipyrrolylmethanemethyl)cysteine.

The protein belongs to the HMBS family. It depends on dipyrromethane as a cofactor.

The protein resides in the plastid. Its subcellular location is the chloroplast. It catalyses the reaction 4 porphobilinogen + H2O = hydroxymethylbilane + 4 NH4(+). Its pathway is porphyrin-containing compound metabolism; protoporphyrin-IX biosynthesis; coproporphyrinogen-III from 5-aminolevulinate: step 2/4. The protein operates within porphyrin-containing compound metabolism; chlorophyll biosynthesis. Functionally, tetrapolymerization of the monopyrrole PBG into the hydroxymethylbilane pre-uroporphyrinogen in several discrete steps. The polypeptide is Porphobilinogen deaminase, chloroplastic (Euglena gracilis).